Reading from the N-terminus, the 121-residue chain is Non-structural protein 8 (121 aa).

An N-terminal signal peptide occupies residues 1–15; sequence MKLLIVFGLLTSVYC. The SARS ORF8 Ig-like domain occupies 19–121; that stretch reads ECSIQECCEN…HDVRVVLDFV (103 aa). Cystine bridges form between cysteine 25-cysteine 90, cysteine 37-cysteine 102, and cysteine 61-cysteine 83.

This is Non-structural protein 8 from Bat coronavirus Rp3/2004 (BtCoV/Rp3/2004).